The primary structure comprises 390 residues: Cell division protein FtsZ (390 aa).

Residues 21–25 (GGGNN), 108–110 (GTG), Glu-139, Arg-143, and Asp-187 contribute to the GTP site. A disordered region spans residues 315–390 (FDDKPTSHGR…EERRSRRTRR (76 aa)). Polar residues predominate over residues 326-360 (SGSTGFGTSVNTSSNATSKDESFTSNSSNAQATDS). Over residues 361 to 384 (VSERTHTTKEDDIPSFIRNREERR) the composition is skewed to basic and acidic residues.

It belongs to the FtsZ family. Homodimer. Polymerizes to form a dynamic ring structure in a strictly GTP-dependent manner. Interacts directly with several other division proteins.

Its subcellular location is the cytoplasm. Functionally, essential cell division protein that forms a contractile ring structure (Z ring) at the future cell division site. The regulation of the ring assembly controls the timing and the location of cell division. One of the functions of the FtsZ ring is to recruit other cell division proteins to the septum to produce a new cell wall between the dividing cells. Binds GTP and shows GTPase activity. This chain is Cell division protein FtsZ, found in Staphylococcus aureus (strain NCTC 8325 / PS 47).